The sequence spans 146 residues: 3-dehydroquinate dehydratase (146 aa).

Residue Tyr-22 is the Proton acceptor of the active site. Residues Asn-73, His-79, and Asp-86 each contribute to the substrate site. His-99 acts as the Proton donor in catalysis. Residues Ile-100–Ser-101 and Arg-110 each bind substrate.

The protein belongs to the type-II 3-dehydroquinase family. As to quaternary structure, homododecamer.

The catalysed reaction is 3-dehydroquinate = 3-dehydroshikimate + H2O. It functions in the pathway metabolic intermediate biosynthesis; chorismate biosynthesis; chorismate from D-erythrose 4-phosphate and phosphoenolpyruvate: step 3/7. In terms of biological role, catalyzes a trans-dehydration via an enolate intermediate. The polypeptide is 3-dehydroquinate dehydratase (Prochlorococcus marinus (strain MIT 9515)).